The following is a 409-amino-acid chain: Elongation factor Tu (409 aa).

In terms of domain architecture, tr-type G spans 10–214 (KPHVNIGTIG…AVDAYIPTPE (205 aa)). Residues 19–26 (GHVDHGKT) form a G1 region. 19 to 26 (GHVDHGKT) is a binding site for GTP. Position 26 (Thr-26) interacts with Mg(2+). The interval 60–64 (GITIN) is G2. Positions 81–84 (DCPG) are G3. GTP-binding positions include 81–85 (DCPGH) and 136–139 (NKKD). Residues 136–139 (NKKD) are G4. Residues 174–176 (SAL) are G5.

This sequence belongs to the TRAFAC class translation factor GTPase superfamily. Classic translation factor GTPase family. EF-Tu/EF-1A subfamily. As to quaternary structure, monomer.

It is found in the cytoplasm. The catalysed reaction is GTP + H2O = GDP + phosphate + H(+). Functionally, GTP hydrolase that promotes the GTP-dependent binding of aminoacyl-tRNA to the A-site of ribosomes during protein biosynthesis. This chain is Elongation factor Tu, found in Gloeobacter violaceus (strain ATCC 29082 / PCC 7421).